The sequence spans 376 residues: Putative C-mannosyltransferase DPY19L2P2 (376 aa).

Asn-32 is a glycosylation site (N-linked (GlcNAc...) asparagine). A run of 6 helical transmembrane segments spans residues 52 to 72 (ACFYVGVIFILNGLMMGLFFI), 107 to 127 (LRESFSYPFLVLQMYVLTLIL), 154 to 174 (AQFILFTQIASLFPMYVVGYI), 182 to 202 (IIYMNMISVTLSFILMFGNSM), 233 to 253 (LNCWLIQGSAWWCGTIILKFL), and 299 to 319 (LLIYTKTLLLPVVMVITCFIF).

This sequence belongs to the dpy-19 family. As to expression, fibroblast, lung, lymphoblast, spleen and testis.

It is found in the membrane. Its function is as follows. Probable C-mannosyltransferase that mediates C-mannosylation of tryptophan residues on target proteins. This chain is Putative C-mannosyltransferase DPY19L2P2 (DPY19L2P2), found in Homo sapiens (Human).